The primary structure comprises 127 residues: MAKTPTRKKSKKVIIDGIAHIHATFNNTIVMITDRHGNAICWSASGGSGFRGSRKSTPFAAQVTAGSCGEKALAFGMKNLEVRVKGPGPGRDSAIRGLNAQGLKIQSITDVTPIPHNGCRPSKKRRV.

It belongs to the universal ribosomal protein uS11 family. Part of the 30S ribosomal subunit. Interacts with proteins S7 and S18. Binds to IF-3.

In terms of biological role, located on the platform of the 30S subunit, it bridges several disparate RNA helices of the 16S rRNA. Forms part of the Shine-Dalgarno cleft in the 70S ribosome. This is Small ribosomal subunit protein uS11 from Ruthia magnifica subsp. Calyptogena magnifica.